Reading from the N-terminus, the 401-residue chain is MTELKLDPYFGEYGGMYVPQILVPALKQLESAFVDAQQDPAFQAEFTDLLKNYAGRPTALTLTRNLSPNPLVKIYLKREDLLHGGAHKTNQVLGQALLAKRMGKKEIIAETGAGQHGVATALACALLGLKCKVYMGAKDVERQSPNVFRMKLMGAEVIPVTSGSATLKDACNEAMRDWSASYDKAHYLLGTAAGPHPFPTIVREFQRMIGEETKQQILEKEGRLPDAVIACVGGGSNAIGMFADFIDEPSVELIGVEPAGKGIDTPMHGAPLKHGKTGIFFGMKAPLMQDRDGQIEESYSVSAGLDFPSVGPQHAHLNAIGRARYESATDDEALAMFQQLARCEGIIPALESAHALAYAVKLAKTATKETILVVNLSGRGDKDIFTVSDILAAKEQESGND.

N6-(pyridoxal phosphate)lysine is present on Lys88.

This sequence belongs to the TrpB family. Tetramer of two alpha and two beta chains. Requires pyridoxal 5'-phosphate as cofactor.

It carries out the reaction (1S,2R)-1-C-(indol-3-yl)glycerol 3-phosphate + L-serine = D-glyceraldehyde 3-phosphate + L-tryptophan + H2O. It functions in the pathway amino-acid biosynthesis; L-tryptophan biosynthesis; L-tryptophan from chorismate: step 5/5. Its function is as follows. The beta subunit is responsible for the synthesis of L-tryptophan from indole and L-serine. The protein is Tryptophan synthase beta chain of Shewanella denitrificans (strain OS217 / ATCC BAA-1090 / DSM 15013).